A 193-amino-acid chain; its full sequence is MRLSDTDIEEWLSKKKLVIQPYPKKQLINGITVDIHLGNKFRFFYDHTTSCIDLSGSKEKIALDLNKIVSCETIFSKKEPFFLKPGALALFSTLENITLPNNLVGWLDGRSSLARLGLMVHVTSHRIDPGWHGNIVLEFFNAGKLTLVLTPGIKIAALSFELLSKPVLRPYNSRNESKYKRQNGVVPSRIYEE.

Residues 110–115 (RSSLAR), aspartate 128, 136–138 (VLE), tyrosine 171, lysine 178, and glutamine 182 each bind dCTP. Catalysis depends on glutamate 138, which acts as the Proton donor/acceptor.

The protein belongs to the dCTP deaminase family. As to quaternary structure, homotrimer.

The catalysed reaction is dCTP + H2O + H(+) = dUTP + NH4(+). The protein operates within pyrimidine metabolism; dUMP biosynthesis; dUMP from dCTP (dUTP route): step 1/2. Its function is as follows. Catalyzes the deamination of dCTP to dUTP. The protein is dCTP deaminase of Buchnera aphidicola subsp. Schizaphis graminum (strain Sg).